The primary structure comprises 348 residues: MRWLFWSSGSQQAPNNKDNNNSNNNDDDDDDYDNNINKRPPLTPESPSPSHPPCASCSTQATASFSNPRRDWNTSLTAHDWAGEFKDPRNLIPTLLLTGGILFCVRIHRQYLRRIPLATNISPTYFHKRSLFGRVTSVGDGDNFRMYHTPGGRLAGWEWLPFRRVPRVKKELKDRTIHIRLAGIDAPELPHFGRPAQPYSHAAHTWLTNYLLNKRVRVFPYRQDQYGRVVATVYVRRFPWIFLRRDVGLQMLRAGMATVYEAKSGVEFGGEGKESKYRRAEEVAKRRGRGLWKGWKGVGWESPREYKNRMAGVEGEKAAAAAAAAAAAAAAAAGVGGMGELGVNGEKN.

The disordered stretch occupies residues 1–70 (MRWLFWSSGS…ATASFSNPRR (70 aa)). Over residues 15–24 (NNKDNNNSNN) the composition is skewed to low complexity. The segment covering 41 to 52 (PLTPESPSPSHP) has biased composition (pro residues). Residues 59-70 (TQATASFSNPRR) are compositionally biased toward polar residues. A helical transmembrane segment spans residues 91–107 (LIPTLLLTGGILFCVRI). Positions 129–294 (RSLFGRVTSV…KRRGRGLWKG (166 aa)) constitute a TNase-like domain. Arg180 is a catalytic residue. Asp185 is a Ca(2+) binding site. Residues Glu188 and Arg228 contribute to the active site.

It belongs to the LCL3 family.

The protein localises to the mitochondrion. Its subcellular location is the membrane. The sequence is that of Probable endonuclease LCL3 (LCL3) from Paracoccidioides lutzii (strain ATCC MYA-826 / Pb01) (Paracoccidioides brasiliensis).